Consider the following 327-residue polypeptide: Delta(6)-protoilludene synthase HYPSUDRAFT_138665 (327 aa).

Mg(2+)-binding residues include Asp79, Asn215, Ser219, and Glu223. Positions 79–83 match the DDXXD motif motif; it reads DEHTD. Residues Arg304 and Tyr305 each coordinate (2E,6E)-farnesyl diphosphate.

This sequence belongs to the terpene synthase family. Requires Mg(2+) as cofactor.

The enzyme catalyses (2E,6E)-farnesyl diphosphate = Delta(6)-protoilludene + diphosphate. Terpene cyclase that catalyzes the cyclization of farnesyl diphosphate (FPP) to delta(6)-protoilludene. This Hypholoma sublateritium (strain FD-334 SS-4) protein is Delta(6)-protoilludene synthase HYPSUDRAFT_138665.